A 238-amino-acid polypeptide reads, in one-letter code: Cysteine-rich venom protein pseudechetoxin-like (238 aa).

A signal peptide spans 1-19; the sequence is MIAFIVLLSLAAVLQQSSG. The propeptide occupies 20 to 28; it reads TVDFASESS. Residues 38–164 enclose the SCP domain; the sequence is VDKHNDLRRS…STKYLYVCQY (127 aa). Cystine bridges form between cysteine 75-cysteine 153, cysteine 92-cysteine 165, cysteine 148-cysteine 162, cysteine 184-cysteine 191, cysteine 187-cysteine 196, cysteine 200-cysteine 233, cysteine 209-cysteine 227, and cysteine 218-cysteine 231. The 34-residue stretch at 200-233 folds into the ShKT domain; sequence CKHNDDLSNCKPLAKKSKCQTEWIKSKCPATCFC.

It belongs to the CRISP family. Expressed by the venom gland.

The protein localises to the secreted. In terms of biological role, blocks olfactory (CNGA2) and retinal (CNGA1) CNG channel currents. Does not affect neither depolarization- nor caffeine-induced contraction of smooth muscle. The protein is Cysteine-rich venom protein pseudechetoxin-like of Oxyuranus microlepidotus (Inland taipan).